The chain runs to 790 residues: Endonuclease MutS2 (790 aa).

Position 334-341 (334-341 (GPNTGGKT)) interacts with ATP. Residues 715–790 (IDVRGQNLEE…GMGVTIVHLK (76 aa)) enclose the Smr domain.

This sequence belongs to the DNA mismatch repair MutS family. MutS2 subfamily. As to quaternary structure, homodimer. Binds to stalled ribosomes, contacting rRNA.

Its function is as follows. Endonuclease that is involved in the suppression of homologous recombination and thus may have a key role in the control of bacterial genetic diversity. Functionally, acts as a ribosome collision sensor, splitting the ribosome into its 2 subunits. Detects stalled/collided 70S ribosomes which it binds and splits by an ATP-hydrolysis driven conformational change. Acts upstream of the ribosome quality control system (RQC), a ribosome-associated complex that mediates the extraction of incompletely synthesized nascent chains from stalled ribosomes and their subsequent degradation. Probably generates substrates for RQC. The sequence is that of Endonuclease MutS2 from Alkaliphilus oremlandii (strain OhILAs) (Clostridium oremlandii (strain OhILAs)).